The following is a 320-amino-acid chain: Heterogeneous nuclear ribonucleoprotein A1 (320 aa).

An N-acetylmethionine modification is found at Met-1. N-acetylserine; in Heterogeneous nuclear ribonucleoprotein A1, N-terminally processed is present on Ser-2. Ser-2 is subject to Phosphoserine. The residue at position 3 (Lys-3) is an N6-acetyllysine; alternate. Lys-3 is covalently cross-linked (Glycyl lysine isopeptide (Lys-Gly) (interchain with G-Cter in SUMO2); alternate). Phosphoserine occurs at positions 4 and 6. The interval 4 to 94 is globular A domain; the sequence is SESPKEPEQL…EPKRAVSRED (91 aa). Lys-8 is covalently cross-linked (Glycyl lysine isopeptide (Lys-Gly) (interchain with G-Cter in SUMO2)). RRM domains are found at residues 14–97 and 105–184; these read RKLF…DSQR and KKIF…LSKQ. Ser-22 is modified (phosphoserine). Lys-78 participates in a covalent cross-link: Glycyl lysine isopeptide (Lys-Gly) (interchain with G-Cter in SUMO2). A globular B domain region spans residues 95-185; it reads SQRPGAHLTV…EVRKALSKQE (91 aa). Lys-113 is covalently cross-linked (Glycyl lysine isopeptide (Lys-Gly) (interchain with G-Cter in SUMO)). Residues Lys-179 and Lys-183 each participate in a glycyl lysine isopeptide (Lys-Gly) (interchain with G-Cter in SUMO2) cross-link. The tract at residues 182–216 is disordered; that stretch reads SKQEMASASSSQRGRSGSGNFGGGRGGGFGGNDNF. A Phosphoserine; by MKNK2 modification is found at Ser-192. At Arg-194 the chain carries Asymmetric dimethylarginine; alternate. Residue Arg-194 is modified to Dimethylated arginine; alternate. Omega-N-methylarginine; alternate is present on Arg-194. Positions 197–216 are enriched in gly residues; it reads SGSGNFGGGRGGGFGGNDNF. Ser-199 carries the phosphoserine modification. Asymmetric dimethylarginine; alternate occurs at positions 206, 218, 225, and 232. Arg-206 bears the Dimethylated arginine; alternate mark. Omega-N-methylarginine; alternate is present on residues Arg-206, Arg-218, Arg-225, and Arg-232. The interval 218-240 is RNA-binding RGG-box; the sequence is RGGNFSGRGGFGGSRGGGGYGGS. Arg-225 bears the Dimethylated arginine; alternate mark. The interval 268–305 is nuclear targeting sequence; that stretch reads NQSSNFGPMKGGNFGGRSLGPYGGGGQYFAKPRNQGGY. Gly residues predominate over residues 277–294; it reads KGGNFGGRSLGPYGGGGQ. The segment at 277–320 is disordered; that stretch reads KGGNFGGRSLGPYGGGGQYFAKPRNQGGYGGSSSSSSYGSGRRF. Position 284 is an omega-N-methylarginine (Arg-284). Ser-285 carries the post-translational modification Phosphoserine. Lys-298 carries the post-translational modification N6-acetyllysine; alternate. A Glycyl lysine isopeptide (Lys-Gly) (interchain with G-Cter in SUMO2); alternate cross-link involves residue Lys-298. An Omega-N-methylarginine modification is found at Arg-300. The segment covering 308–320 has biased composition (low complexity); the sequence is SSSSSSYGSGRRF. Phosphoserine is present on Ser-309. Phosphoserine; by MKNK2 is present on residues Ser-310, Ser-311, and Ser-312. A phosphoserine mark is found at Ser-313 and Ser-316. The residue at position 318 (Arg-318) is an Omega-N-methylarginine.

Identified in the spliceosome C complex. Identified in a IGF2BP1-dependent mRNP granule complex containing untranslated mRNAs. Interacts with SEPT6, C9orf72, KHDRBS1, UBQLN2. Interacts with PPIA/CYPA. Sumoylated.

It is found in the nucleus. The protein localises to the cytoplasm. In terms of biological role, involved in the packaging of pre-mRNA into hnRNP particles, transport of poly(A) mRNA from the nucleus to the cytoplasm and modulation of splice site selection. Plays a role in the splicing of pyruvate kinase PKM by binding repressively to sequences flanking PKM exon 9, inhibiting exon 9 inclusion and resulting in exon 10 inclusion and production of the PKM M2 isoform. Binds to the IRES and thereby inhibits the translation of the apoptosis protease activating factor APAF1. May bind to specific miRNA hairpins. The protein is Heterogeneous nuclear ribonucleoprotein A1 (HNRNPA1) of Macaca mulatta (Rhesus macaque).